A 556-amino-acid polypeptide reads, in one-letter code: PTS system fructose-specific EIIB'BC component (556 aa).

2 PTS EIIB type-2 domains span residues 1-85 (MKLF…LANG) and 106-201 (IVAV…KAFK). Catalysis depends on cysteine 112, which acts as the Phosphocysteine intermediate; for EIIB activity. Cysteine 112 bears the Phosphocysteine; by EIIA mark. The PTS EIIC type-2 domain maps to 224 to 556 (VYKHLMTGVS…AIIKSKNNAE (333 aa)). Transmembrane regions (helical) follow at residues 237-257 (PLVVAGGLLIAISFMFSFNVI), 275-295 (SGVAFKLMIAVFAGYVAFSIA), 302-322 (VGLIAGMLASEAGAGILGGII), 324-344 (GFLAGYVVKGLNVIIRLPASL), 349-369 (PILILPLLGSMIVGLTMIYLI), 390-410 (VNAIVLGAIIGAMMCIDMGGP), 431-451 (MAAAMAAGMVPPIGMTVATWI), 468-488 (FVLGLCFISEGALPFVAADPI), 490-510 (VIISSVIGGAVAGAISMGLNI), and 529-549 (LKYLGAIAIGALSTGVVYAII).

Its subcellular location is the cell inner membrane. The catalysed reaction is D-fructose(out) + N(pros)-phospho-L-histidyl-[protein] = D-fructose 1-phosphate(in) + L-histidyl-[protein]. Functionally, the phosphoenolpyruvate-dependent sugar phosphotransferase system (sugar PTS), a major carbohydrate active transport system, catalyzes the phosphorylation of incoming sugar substrates concomitantly with their translocation across the cell membrane. The enzyme II FruAB PTS system is involved in fructose transport. The chain is PTS system fructose-specific EIIB'BC component from Haemophilus influenzae (strain ATCC 51907 / DSM 11121 / KW20 / Rd).